The primary structure comprises 214 residues: Eukaryotic translation initiation factor 4E-1B (214 aa).

MRNA contacts are provided by residues 53 to 54 (WQ), 99 to 100 (WE), 154 to 159 (RAKGDK), and 202 to 204 (TKS).

As to expression, ovary, muscle and testis.

It is found in the cytoplasm. The protein localises to the nucleus. Its function is as follows. Does not appear to be a mRNA-cap-binding protein. This is Eukaryotic translation initiation factor 4E-1B from Danio rerio (Zebrafish).